Here is a 293-residue protein sequence, read N- to C-terminus: MEEPSGAQLLGPVEIRALAEKLDVTPTKKLGQNFVHDPNTVRRIVAAAELTPDDHVVEVGPGLGSLTLALVESAASVTAVEIDPRLAAELPETFQWRAPALAHKLSIVLKDALKVQQSDMEVQPTALVANLPYNVSVPVLLHMLEEFPTINKVLVMVQAEVADRLAADPGSKIYGVPSVKASFYGPVTRAGSIGKNVFWPAPKIESGLVKIVREDTAWKQDDETRKKVWPIIDAAFLQRRKTLRAALSGHYGSGQAAEEALRAADIDPTLRGEKLDVTDYVRLAGVLQQKDEK.

S-adenosyl-L-methionine is bound by residues Asn33, Val35, Gly60, Glu81, Asp111, and Asn130.

This sequence belongs to the class I-like SAM-binding methyltransferase superfamily. rRNA adenine N(6)-methyltransferase family. RsmA subfamily.

The protein resides in the cytoplasm. The catalysed reaction is adenosine(1518)/adenosine(1519) in 16S rRNA + 4 S-adenosyl-L-methionine = N(6)-dimethyladenosine(1518)/N(6)-dimethyladenosine(1519) in 16S rRNA + 4 S-adenosyl-L-homocysteine + 4 H(+). Functionally, specifically dimethylates two adjacent adenosines (A1518 and A1519) in the loop of a conserved hairpin near the 3'-end of 16S rRNA in the 30S particle. May play a critical role in biogenesis of 30S subunits. The chain is Ribosomal RNA small subunit methyltransferase A from Corynebacterium glutamicum (strain R).